A 473-amino-acid polypeptide reads, in one-letter code: MRNPKSFCVVAGFVRLPKSSLGQVRYYSIPNDVSIPASKGKFIPGSGTYPKGFLVAGAHAGVKESNTQFPDVALICSETPCSAAAVFTTNKFQAAPVQVSKQVLEKRQGAGIRGVVINSGCANAVTGKGGLEDAKMMSAKVDECNGTPSTGPQDTSTLVMSTGVIGQRLPIKKILDAIPTAHSNLASTHSTWLATARAICTTDTFPKLLSRTFTLPSSPNRQYCLAGMTKGAGMIHPNMATLLGILCTDVPISPSALKALLTHAVSRSFNAISIDGDTSTNDTIALLANGAAGGEAITTTSSQDYAAMQTILTSFAQSLAQLVVRDGEGATKFITVRVCNSPSHADAKAIASTIARSPLVKTALYGKDANWGRILCAIGYAQGIAEGTVVPERTSVSFRPVDGSAELKLLVNGEPEAVDEERAARILQDEDLEIVVDLGGGQKGEKGLGGEEGLYWFCDFSHEYVTINGDYRT.

Residues Thr201, Lys230, Thr241, Glu328, Asn468, and Thr473 each contribute to the substrate site. The active-site Nucleophile is Thr241.

It belongs to the ArgJ family. As to quaternary structure, heterodimer of an alpha and a beta chain. In terms of processing, the alpha and beta chains are autoproteolytically processed from a single precursor protein within the mitochondrion.

It localises to the mitochondrion matrix. The catalysed reaction is N(2)-acetyl-L-ornithine + L-glutamate = N-acetyl-L-glutamate + L-ornithine. It catalyses the reaction L-glutamate + acetyl-CoA = N-acetyl-L-glutamate + CoA + H(+). It participates in amino-acid biosynthesis; L-arginine biosynthesis; L-ornithine and N-acetyl-L-glutamate from L-glutamate and N(2)-acetyl-L-ornithine (cyclic): step 1/1. Its pathway is amino-acid biosynthesis; L-arginine biosynthesis; N(2)-acetyl-L-ornithine from L-glutamate: step 1/4. In terms of biological role, catalyzes two activities which are involved in the cyclic version of arginine biosynthesis: the synthesis of acetylglutamate from glutamate and acetyl-CoA, and of ornithine by transacetylation between acetylornithine and glutamate. This Ajellomyces capsulatus (strain H143) (Darling's disease fungus) protein is Arginine biosynthesis bifunctional protein ArgJ, mitochondrial.